A 464-amino-acid chain; its full sequence is tRNA modification GTPase MnmE (464 aa).

(6S)-5-formyl-5,6,7,8-tetrahydrofolate-binding residues include Arg-27, Glu-90, and Lys-129. Residues 222–384 (GVALVLAGSV…LYDKIRALIS (163 aa)) enclose the TrmE-type G domain. GTP is bound by residues 232-237 (NAGKSS), 251-257 (SSYPGTT), and 276-279 (DTAG). Positions 236 and 257 each coordinate Mg(2+). Position 464 (Lys-464) interacts with (6S)-5-formyl-5,6,7,8-tetrahydrofolate.

This sequence belongs to the TRAFAC class TrmE-Era-EngA-EngB-Septin-like GTPase superfamily. TrmE GTPase family. In terms of assembly, homodimer. Heterotetramer of two MnmE and two MnmG subunits. It depends on K(+) as a cofactor.

It is found in the cytoplasm. Functionally, exhibits a very high intrinsic GTPase hydrolysis rate. Involved in the addition of a carboxymethylaminomethyl (cmnm) group at the wobble position (U34) of certain tRNAs, forming tRNA-cmnm(5)s(2)U34. This Borreliella burgdorferi (strain ATCC 35210 / DSM 4680 / CIP 102532 / B31) (Borrelia burgdorferi) protein is tRNA modification GTPase MnmE.